Reading from the N-terminus, the 582-residue chain is uncharacterized protein (582 aa).

Helical transmembrane passes span 29–49 (LFIVLLRFIIPSILVSFFAAL), 117–137 (ISAPITVIINALTLLITMGLA), 155–175 (VWATGFITNVIVSIATSMIIV), 225–245 (YVYILAGLFTIQTFNQMYFLL), 254–274 (FISIIPPLANLINILFDYLLI), 287–307 (ATVIGWSLSCLAYVIYNIVLI), 329–349 (YLYLIILIGLASFFRNAALSV), 376–396 (SIFGSVTPISNLMLQSVWGLI), 432–452 (IVYLLFGFGLNNIFLINLFNI), 458–478 (LVVSNLVLRITLVQSIFIALS), 491–511 (IGMAWIASLMQGLFTFAPVFF), and 523–543 (IYLYIWIQPINAILTCIGNWI).

The protein localises to the cell membrane. This is an uncharacterized protein from Mycoplasmoides gallisepticum (strain R(low / passage 15 / clone 2)) (Mycoplasma gallisepticum).